The primary structure comprises 487 residues: uncharacterized protein (487 aa).

A helical membrane pass occupies residues 7–28 (HVISIFETLGAYFINIFYNFLY). Asparagine 73, asparagine 83, and asparagine 195 each carry an N-linked (GlcNAc...) asparagine; by host glycan. A coiled-coil region spans residues 196–235 (RSLLHQIEELTSEKKSLLADLSTLRKKYEKRQSEYRRLVQ). Positions 294-305 (TSQELTSKSPNN) are enriched in polar residues. The interval 294 to 324 (TSQELTSKSPNNYPVPHSRTIVSKPSDNYPV) is disordered. N-linked (GlcNAc...) asparagine; by host glycosylation is present at asparagine 462.

Belongs to the asfivirus B475L family.

The protein resides in the host membrane. This is an uncharacterized protein from African swine fever virus (isolate Tick/South Africa/Pretoriuskop Pr4/1996) (ASFV).